A 365-amino-acid chain; its full sequence is Succinyl-diaminopimelate desuccinylase (365 aa).

Histidine 64 contributes to the Zn(2+) binding site. The active site involves aspartate 66. Residue aspartate 95 participates in Zn(2+) binding. The active-site Proton acceptor is glutamate 125. Zn(2+) is bound by residues glutamate 126, glutamate 154, and histidine 339.

This sequence belongs to the peptidase M20A family. DapE subfamily. In terms of assembly, homodimer. Zn(2+) is required as a cofactor. Co(2+) serves as cofactor.

The catalysed reaction is N-succinyl-(2S,6S)-2,6-diaminopimelate + H2O = (2S,6S)-2,6-diaminopimelate + succinate. It functions in the pathway amino-acid biosynthesis; L-lysine biosynthesis via DAP pathway; LL-2,6-diaminopimelate from (S)-tetrahydrodipicolinate (succinylase route): step 3/3. Catalyzes the hydrolysis of N-succinyl-L,L-diaminopimelic acid (SDAP), forming succinate and LL-2,6-diaminopimelate (DAP), an intermediate involved in the bacterial biosynthesis of lysine and meso-diaminopimelic acid, an essential component of bacterial cell walls. This is Succinyl-diaminopimelate desuccinylase from Sulfurimonas denitrificans (strain ATCC 33889 / DSM 1251) (Thiomicrospira denitrificans (strain ATCC 33889 / DSM 1251)).